The primary structure comprises 365 residues: PDZ and LIM domain protein 3 (365 aa).

Positions 1–84 (MPQNVILPGP…QLCLKIDRAE (84 aa)) constitute a PDZ domain. Serine 18 is subject to Phosphoserine. The interval 126 to 156 (FIIPGRSSGCSTPSGIDGGSGRSTPSSVSTL) is disordered. A compositionally biased stretch (polar residues) spans 147–156 (RSTPSSVSTL). The 60-residue stretch at 293–352 (PLCDKCGSGIVGAVVKARDKYRHPECFVCADCNLNLKQKGYFFVEGELYCETHARARMRP) folds into the LIM zinc-binding domain.

Interacts with ACTN2. Forms a heterodimer with PDLIM4 (via LIM domain).

Its subcellular location is the cytoplasm. It is found in the myofibril. It localises to the sarcomere. The protein resides in the z line. May play a role in the organization of actin filament arrays within muscle cells. This is PDZ and LIM domain protein 3 (PDLIM3) from Sus scrofa (Pig).